We begin with the raw amino-acid sequence, 129 residues long: Beta-galactoside-binding lectin (129 aa).

Serine 1 carries the post-translational modification N-acetylserine. The 126-residue stretch at 4–129 (GVVDERMSFK…EARIYSIEIK (126 aa)) folds into the Galectin domain. 69–75 (WGTEQRE) lines the a beta-D-galactoside pocket.

Its function is as follows. This protein binds beta-galactoside. Its physiological function is not yet known. This Electrophorus electricus (Electric eel) protein is Beta-galactoside-binding lectin.